The following is a 671-amino-acid chain: Fusexin 1 (671 aa).

The Cytoplasmic portion of the chain corresponds to 1–12 (MRAVSDFLKNKW). Residues 13 to 33 (VAVPAVALLILSLGFLAQNYI) form a helical membrane-spanning segment. Topologically, residues 34–574 (TGSFVSGDQI…DPFCADGPLE (541 aa)) are extracellular. Intrachain disulfides connect C145-C180, C409-C452, C480-C500, and C513-C528. Residues 168–173 (GAIADY) form a fusion loop region. Residues 575–595 (MLSKMFHLVAGTAVAFFTGSL) form a helical membrane-spanning segment. The Cytoplasmic portion of the chain corresponds to 596–628 (GYRAGRWVDGEYQIKGGFDPLKSRSVSRAKRGR). A helical transmembrane segment spans residues 629–649 (FLIGLIAELVSFLLGFYVILL). Position 650 (V650) is a topological domain, extracellular. Residues 651 to 671 (PIWAQLMVILGYVLFKYYTPF) traverse the membrane as a helical segment.

It belongs to the HAP2/GCS1 family. Fusexin 1 subfamily. As to quaternary structure, homotrimer stabilized by interdomain contacts and numerous Ca(2+) and Na(+) ions.

The protein localises to the cell surface. Its subcellular location is the cell membrane. Its function is as follows. Exhibits fusogenic activity. Mediates cell-cell fusion in mammalian cells (bilateral fusion). This Natrinema altunense (strain JCM 12890 / CGMCC 1.3731 / AJ2) protein is Fusexin 1.